The following is a 428-amino-acid chain: Flotillin-2a (428 aa).

3 S-palmitoyl cysteine lipidation sites follow: Cys4, Cys19, and Cys20.

This sequence belongs to the band 7/mec-2 family. Flotillin subfamily. Heterooligomer; Heterooligomerizes with ic complex of flotillins 1 and 2. Post-translationally, palmitoylation may be required for the formation of higher order complexes and for neurite outgrowth in cultured neural stem cells.

Its subcellular location is the membrane. The protein resides in the endosome. May play a role in axon growth and regeneration. May be involved in epidermal cell adhesion and epidermal structure and function. The polypeptide is Flotillin-2a (flot2a) (Danio rerio (Zebrafish)).